A 313-amino-acid polypeptide reads, in one-letter code: Maintenance of mitochondrial morphology protein 1 (313 aa).

Topologically, residues 1-12 (MIHLPQGSFTQG) are lumenal. The chain crosses the membrane as a helical span at residues 13-33 (LIVGQLLTLAIIYVFLRFFLF). Over 34–313 (CSPIPKSVAN…APQEESSNED (280 aa)) the chain is Cytoplasmic. Over residues 42–63 (ANSPKQTGNETPDETPSTPLSN) the composition is skewed to polar residues. The tract at residues 42 to 65 (ANSPKQTGNETPDETPSTPLSNNK) is disordered. Positions 90–288 (EPESLDWFNV…SPQFQQIAIP (199 aa)) constitute an SMP-LTD domain.

The protein belongs to the MMM1 family. In terms of assembly, homodimer. Component of the ER-mitochondria encounter structure (ERMES) or MDM complex, composed of mmm1, mdm10, mdm12 and mdm34. A mmm1 homodimer associates with one molecule of mdm12 on each side in a pairwise head-to-tail manner, and the SMP-LTD domains of mmm1 and mdm12 generate a continuous hydrophobic tunnel for phospholipid trafficking.

It localises to the endoplasmic reticulum membrane. Component of the ERMES/MDM complex, which serves as a molecular tether to connect the endoplasmic reticulum (ER) and mitochondria. Components of this complex are involved in the control of mitochondrial shape and protein biogenesis, and function in nonvesicular lipid trafficking between the ER and mitochondria. The mdm12-mmm1 subcomplex functions in the major beta-barrel assembly pathway that is responsible for biogenesis of all outer membrane beta-barrel proteins, and acts in a late step after the SAM complex. The mdm10-mdm12-mmm1 subcomplex further acts in the TOM40-specific pathway after the action of the mdm12-mmm1 complex. Essential for establishing and maintaining the structure of mitochondria and maintenance of mtDNA nucleoids. This chain is Maintenance of mitochondrial morphology protein 1, found in Schizosaccharomyces pombe (strain 972 / ATCC 24843) (Fission yeast).